Reading from the N-terminus, the 364-residue chain is Mannose-1-phosphate guanylyltransferase catalytic subunit beta (364 aa).

Residues 2-220 (KALILVGGYG…PGFWMDVGQP (219 aa)) form a substrate-binding domain region. Residue Asp-109 coordinates GDP-alpha-D-mannose. Asp-109 is a Mg(2+) binding site. Lys-160 is an active-site residue. Position 216 (Asp-216) interacts with GDP-alpha-D-mannose. Asp-216 contacts Mg(2+). Residues 243 to 364 (ATGSNIHGTA…VNVPSKDIIM (122 aa)) form a hexapeptide repeat domain region.

This sequence belongs to the transferase hexapeptide repeat family. Component of the GMPPA-GMPPB mannose-1-phosphate guanylyltransferase complex composed of 4 GMPPA subunits and 8 tag-335/GMPPB subunits; the complex is organized into three layers, a central layer made up of 2 GMPPA dimers sandwiched between two layers each made up of 2 tag-335/GMPPB dimers. Catalytic activity of tag-335/GMPPB is reduced when part of the complex and binding of GDP-alpha-D-Mannose by GMPPA induces allosteric feedback inhibition of tag-335/GMPPB. It depends on Mg(2+) as a cofactor.

The catalysed reaction is alpha-D-mannose 1-phosphate + GTP + H(+) = GDP-alpha-D-mannose + diphosphate. It participates in nucleotide-sugar biosynthesis; GDP-alpha-D-mannose biosynthesis; GDP-alpha-D-mannose from alpha-D-mannose 1-phosphate (GTP route): step 1/1. With respect to regulation, enzyme activity is reduced by incorporation into the GMPPA-GMPPB mannose-1-phosphate guanylyltransferase complex. Allosterically inhibited, when part of the GMPPA-GMPPB complex, by GDP-alpha-D-mannose binding to GMPPA. Catalytic subunit of the GMPPA-GMPPB mannose-1-phosphate guanylyltransferase complex. Catalyzes the formation of GDP-mannose, an essential precursor of glycan moieties of glycoproteins and glycolipids. Can catalyze the reverse reaction in vitro. Together with GMPPA regulates GDP-alpha-D-mannose levels. This Caenorhabditis briggsae protein is Mannose-1-phosphate guanylyltransferase catalytic subunit beta.